Here is a 2151-residue protein sequence, read N- to C-terminus: RNA-directed RNA polymerase L (2151 aa).

Residues histidine 36, glutamate 54, aspartate 97, glutamate 110, and valine 111 each coordinate Mn(2+). The active-site For endonuclease activity is the lysine 124. In terms of domain architecture, RdRp catalytic spans 956–1142 (NGKFIRMKRK…SVNTEMWKSM (187 aa)). Residue aspartate 1099 participates in Mg(2+) binding.

It belongs to the Bunyavirales RNA polymerase family. Interacts with the viral nucleoprotein. It depends on Mn(2+) as a cofactor. Requires Mg(2+) as cofactor.

It localises to the host cytoplasm. The protein resides in the host perinuclear region. It catalyses the reaction RNA(n) + a ribonucleoside 5'-triphosphate = RNA(n+1) + diphosphate. RNA-dependent RNA polymerase, which is responsible for the replication and transcription of the viral RNA genome using antigenomic RNA as an intermediate. During transcription, synthesizes subgenomic RNAs and assures their capping by a cap-snatching mechanism, which involves the endonuclease activity cleaving the host capped pre-mRNAs. These short capped RNAs are then used as primers for viral transcription. Cleaves ssRNA substrates but not DNA. Seems to downregulate the expression of its own and heterologous mRNAs through its endonuclease activity. This chain is RNA-directed RNA polymerase L, found in Apodemus agrarius (Eurasian field mouse).